The sequence spans 497 residues: Serine hydroxymethyltransferase (497 aa).

(6S)-5,6,7,8-tetrahydrofolate is bound by residues Leu176 and 180–182 (GHL). Residue Lys289 is modified to N6-(pyridoxal phosphate)lysine.

This sequence belongs to the SHMT family. Homodimer. Requires pyridoxal 5'-phosphate as cofactor.

It localises to the cytoplasm. The enzyme catalyses (6R)-5,10-methylene-5,6,7,8-tetrahydrofolate + glycine + H2O = (6S)-5,6,7,8-tetrahydrofolate + L-serine. The protein operates within one-carbon metabolism; tetrahydrofolate interconversion. It participates in amino-acid biosynthesis; glycine biosynthesis; glycine from L-serine: step 1/1. Its function is as follows. Catalyzes the reversible interconversion of serine and glycine with tetrahydrofolate (THF) serving as the one-carbon carrier. This reaction serves as the major source of one-carbon groups required for the biosynthesis of purines, thymidylate, methionine, and other important biomolecules. Also exhibits THF-independent aldolase activity toward beta-hydroxyamino acids, producing glycine and aldehydes, via a retro-aldol mechanism. This is Serine hydroxymethyltransferase from Chlamydia abortus (strain DSM 27085 / S26/3) (Chlamydophila abortus).